A 491-amino-acid polypeptide reads, in one-letter code: MANYFNTLNLRQQLAQLGKCRFMGRDEFADGASYLQGKKVVIVGCGAQGLNQGLNMRDSGLDISYALRKEAIAEKRASWRKATENGFKVGTYEELIPQADLVVNLTPDKQHSDVVRTVQPLMKDGAALGYSHGFNIVEVGEQIRKDITVVMVAPKCPGTEVREEYKRGFGVPTLIAVHPENDPKGEGMAIAKAWAAATGGHRAGVLESSFVAEVKSDLMGEQTILCGMLQAGSLLCFDKLVEEGTDPAYAEKLIQFGWETITEALKQGGITLMMDRLSNPAKLRAYALSEQLKEIMAPLFQKHMDDIISGEFSSGMMADWANDDKKLLTWREETGKTAFETAPQYEGKIGEQEYFDKGVLMIAMVKAGVELAFETMVDSGIIEESAYYESLHELPLIANTIVRKRLYEMNVVISDTAEYGNYLFSYACVPLLKPFMAELQPGDLGKAIPEGAVDNAQLRDVNEAIRSHAIEQVGKKLRGYMTDMKRIAVAG.

Residues 15–208 enclose the KARI N-terminal Rossmann domain; that stretch reads AQLGKCRFMG…GGHRAGVLES (194 aa). NADP(+)-binding positions include 45–48, Arg-68, Arg-76, Ser-78, and 108–110; these read CGAQ and DKQ. His-132 is an active-site residue. Gly-158 is an NADP(+) binding site. KARI C-terminal knotted domains are found at residues 209-344 and 345-484; these read SFVA…TAPQ and YEGK…MTDM. Mg(2+) is bound by residues Asp-217, Glu-221, Glu-389, and Glu-393. Ser-414 serves as a coordination point for substrate.

This sequence belongs to the ketol-acid reductoisomerase family. Mg(2+) serves as cofactor.

It catalyses the reaction (2R)-2,3-dihydroxy-3-methylbutanoate + NADP(+) = (2S)-2-acetolactate + NADPH + H(+). The enzyme catalyses (2R,3R)-2,3-dihydroxy-3-methylpentanoate + NADP(+) = (S)-2-ethyl-2-hydroxy-3-oxobutanoate + NADPH + H(+). It participates in amino-acid biosynthesis; L-isoleucine biosynthesis; L-isoleucine from 2-oxobutanoate: step 2/4. Its pathway is amino-acid biosynthesis; L-valine biosynthesis; L-valine from pyruvate: step 2/4. Functionally, involved in the biosynthesis of branched-chain amino acids (BCAA). Catalyzes an alkyl-migration followed by a ketol-acid reduction of (S)-2-acetolactate (S2AL) to yield (R)-2,3-dihydroxy-isovalerate. In the isomerase reaction, S2AL is rearranged via a Mg-dependent methyl migration to produce 3-hydroxy-3-methyl-2-ketobutyrate (HMKB). In the reductase reaction, this 2-ketoacid undergoes a metal-dependent reduction by NADPH to yield (R)-2,3-dihydroxy-isovalerate. The chain is Ketol-acid reductoisomerase (NADP(+)) from Shigella flexneri.